Consider the following 106-residue polypeptide: MTPDRRLISIFRSSKKEEMYVYVDKKQGVGALPEALLQLFGKPQHVFDLLLTKEKPLARADAAEVMSAIDEKGFYLQMPPVQDDYMMDVVRAREQTPAVGRKDLDD.

The region spanning 6–90 (RLISIFRSSK…VQDDYMMDVV (85 aa)) is the YcgL domain.

This is YcgL domain-containing protein HCH_02617 from Hahella chejuensis (strain KCTC 2396).